Reading from the N-terminus, the 555-residue chain is uncharacterized protein (555 aa).

The next 5 helical transmembrane spans lie at 13–30 (ALQA…GLGL), 35–57 (FWGV…HFGL), 72–91 (LVIF…FSSF), 98–120 (LNML…SYAT), and 157–179 (TPAL…AVLL). RCK C-terminal domains lie at 188–273 (EDLE…LFGE) and 282–366 (KEDI…VLGN). The next 6 membrane-spanning stretches (helical) occupy residues 376–398 (LVVI…SIPG), 408–430 (AGGP…MITY), 437–459 (LMLR…GAHF), 469–491 (LLWI…FVAF), 498–517 (FGSV…ALNY), and 532–554 (ATVY…MFLL).

The protein belongs to the AAE transporter (TC 2.A.81) family.

The protein resides in the cell membrane. This is an uncharacterized protein from Bacteroides thetaiotaomicron (strain ATCC 29148 / DSM 2079 / JCM 5827 / CCUG 10774 / NCTC 10582 / VPI-5482 / E50).